Here is a 380-residue protein sequence, read N- to C-terminus: All-trans-retinol dehydrogenase [NAD(+)] ADH4 (380 aa).

Residue Cys47 participates in Zn(2+) binding. 48–49 (HT) lines the NAD(+) pocket. Residues His69, Cys99, Cys102, Cys105, and Cys113 each coordinate Zn(2+). At Ser121 the chain carries Phosphoserine. Cys180 is a binding site for Zn(2+). Residues 205 to 210 (GLGGVG), Asp229, and Lys234 contribute to the NAD(+) site. The residue at position 278 (Ser278) is a Phosphoserine. NAD(+)-binding positions include 298–300 (IGV), 323–325 (TFF), and Arg375.

Belongs to the zinc-containing alcohol dehydrogenase family. Class-II subfamily. In terms of assembly, homodimer. It depends on Zn(2+) as a cofactor.

The protein localises to the cytoplasm. It carries out the reaction all-trans-retinol + NAD(+) = all-trans-retinal + NADH + H(+). The enzyme catalyses 9-cis-retinol + NAD(+) = 9-cis-retinal + NADH + H(+). The catalysed reaction is 20-oxo-(5Z,8Z,11Z,14Z)-eicosatetraenoate + NAD(+) + H2O = (5Z,8Z,11Z,14Z)-eicosatetraenedioate + NADH + 2 H(+). It catalyses the reaction 20-hydroxy-(5Z,8Z,11Z,14Z)-eicosatetraenoate + NAD(+) = 20-oxo-(5Z,8Z,11Z,14Z)-eicosatetraenoate + NADH + H(+). It carries out the reaction 1,4-benzoquinone + NADH + H(+) = hydroquinone + NAD(+). With respect to regulation, oxydation of 20-HETE is inhibited by low concentrations of N-heptylformamide. Oxydation of 20-HETE is a decreased by 55-65% by either all-trans-retinol or all-trans-retinoic acid. Strongly inhibited by omega-hydroxy fatty acids. Functionally, catalyzes the NAD-dependent oxidation of either all-trans-retinol or 9-cis-retinol. Also oxidizes long chain omega-hydroxy fatty acids, such as 20-HETE, producing both the intermediate aldehyde, 20-oxoarachidonate and the end product, a dicarboxylic acid, (5Z,8Z,11Z,14Z)-eicosatetraenedioate. Also catalyzes the reduction of benzoquinones. This chain is All-trans-retinol dehydrogenase [NAD(+)] ADH4, found in Homo sapiens (Human).